The following is a 361-amino-acid chain: S-adenosylmethionine:tRNA ribosyltransferase-isomerase (361 aa).

It belongs to the QueA family. In terms of assembly, monomer.

The protein localises to the cytoplasm. It carries out the reaction 7-aminomethyl-7-carbaguanosine(34) in tRNA + S-adenosyl-L-methionine = epoxyqueuosine(34) in tRNA + adenine + L-methionine + 2 H(+). It participates in tRNA modification; tRNA-queuosine biosynthesis. Its function is as follows. Transfers and isomerizes the ribose moiety from AdoMet to the 7-aminomethyl group of 7-deazaguanine (preQ1-tRNA) to give epoxyqueuosine (oQ-tRNA). The chain is S-adenosylmethionine:tRNA ribosyltransferase-isomerase from Haemophilus ducreyi (strain 35000HP / ATCC 700724).